Consider the following 481-residue polypeptide: Vanillin dehydrogenase (481 aa).

Residue 228 to 233 coordinates NAD(+); the sequence is GSTHVG. Catalysis depends on residues glutamate 250 and cysteine 284.

This sequence belongs to the aldehyde dehydrogenase family.

The enzyme catalyses vanillin + NAD(+) + H2O = vanillate + NADH + 2 H(+). Functionally, catalyzes the NAD-dependent oxidation of vanillin to vanillic acid. The protein is Vanillin dehydrogenase (vdh) of Pseudomonas sp. (strain HR199 / DSM 7063).